We begin with the raw amino-acid sequence, 1284 residues long: Putative late blight resistance protein homolog R1B-16 (1284 aa).

The stretch at 533-555 (PRMNEEIVGFKDVIENLRNQLLN) forms a coiled coil. Residues 534–821 (RMNEEIVGFK…SESFIKSSEG (288 aa)) form the NB-ARC domain. 567 to 574 (GMPGLGKT) serves as a coordination point for ATP. LRR repeat units follow at residues 942-966 (FKFL…LFYL), 985-1010 (LWNL…VWDM), 1013-1036 (LRHL…SAKL), 1085-1107 (PIRL…FCIS), 1108-1135 (APNL…HLKN), 1159-1181 (FPQL…ADDA), 1182-1206 (FPNL…FMDI), and 1219-1243 (ESVV…NFKL). The region spanning 1217–1284 (CNESVVKSAM…VEKQRKRGML (68 aa)) is the HMA domain.

Belongs to the disease resistance NB-LRR family.

Its subcellular location is the cytoplasm. The protein resides in the membrane. Confers resistance to late blight (Phytophthora infestans) races carrying the avirulence gene Avr1. Resistance proteins guard the plant against pathogens that contain an appropriate avirulence protein via an indirect interaction with this avirulence protein. That triggers a defense system including the hypersensitive response, which restricts the pathogen growth. The protein is Putative late blight resistance protein homolog R1B-16 (R1B-16) of Solanum demissum (Wild potato).